We begin with the raw amino-acid sequence, 185 residues long: Ribosome-recycling factor (185 aa).

Belongs to the RRF family.

It localises to the cytoplasm. Its function is as follows. Responsible for the release of ribosomes from messenger RNA at the termination of protein biosynthesis. May increase the efficiency of translation by recycling ribosomes from one round of translation to another. The chain is Ribosome-recycling factor from Vibrio parahaemolyticus serotype O3:K6 (strain RIMD 2210633).